The primary structure comprises 280 residues: B3 domain-containing protein At5g25470 (280 aa).

The TF-B3 1 DNA-binding region spans 20–114 (WKSLSPGQNW…FLEVQIFKND (95 aa)). The interval 122-153 (PPEVEPETEPFHPTTPKNSHKETTTASASASA) is disordered. Residues 183-276 (YFVKTLTKGN…ELVTAVRVHF (94 aa)) constitute a DNA-binding region (TF-B3 2).

The protein resides in the nucleus. The chain is B3 domain-containing protein At5g25470 from Arabidopsis thaliana (Mouse-ear cress).